The sequence spans 284 residues: Nucleotide-binding protein PputGB1_0956 (284 aa).

Residue 8–15 (GRSGSGKS) coordinates ATP. 60-63 (DARN) contacts GTP.

It belongs to the RapZ-like family.

Displays ATPase and GTPase activities. This Pseudomonas putida (strain GB-1) protein is Nucleotide-binding protein PputGB1_0956.